We begin with the raw amino-acid sequence, 188 residues long: Peptidyl-tRNA hydrolase (188 aa).

Phe-15 contributes to the tRNA binding site. His-20 acts as the Proton acceptor in catalysis. TRNA-binding residues include Tyr-64, Asn-66, and Asn-112.

The protein belongs to the PTH family. As to quaternary structure, monomer.

It is found in the cytoplasm. The catalysed reaction is an N-acyl-L-alpha-aminoacyl-tRNA + H2O = an N-acyl-L-amino acid + a tRNA + H(+). In terms of biological role, hydrolyzes ribosome-free peptidyl-tRNAs (with 1 or more amino acids incorporated), which drop off the ribosome during protein synthesis, or as a result of ribosome stalling. Functionally, catalyzes the release of premature peptidyl moieties from peptidyl-tRNA molecules trapped in stalled 50S ribosomal subunits, and thus maintains levels of free tRNAs and 50S ribosomes. This is Peptidyl-tRNA hydrolase from Borrelia recurrentis (strain A1).